Consider the following 31-residue polypeptide: Potassium channel toxin alpha-KTx 5.1 (31 aa).

3 cysteine pairs are disulfide-bonded: Cys-3–Cys-21, Cys-8–Cys-26, and Cys-12–Cys-28. The interval 6-9 is [R/K]XCQ motif; that stretch reads RMCQ. His-31 bears the Histidine amide mark.

The protein belongs to the short scorpion toxin superfamily. Potassium channel inhibitor family. Alpha-KTx 05 subfamily. Two disulfide bonds are the minimal requirement needed to produce a nativelike and bio-active conformation in this toxin. The third disulfide provides an additional contribution to structure stabilization and can modulate biological potency depending on its position and the structural regions involved in biological activity. Expressed by the venom gland.

The protein localises to the secreted. Blocker for the small conductance calcium-activated potassium channels. Shows the best affinity for KCa2.2/KCNN2 (Kd=0.2 nM), followed by KCa2.3/KCNN3 (Kd=1.1 nM) and KCa2.1/KCNN1 (Kd=325 nM). The protein is Potassium channel toxin alpha-KTx 5.1 of Leiurus hebraeus (Hebrew deathstalker scorpion).